Consider the following 481-residue polypeptide: Glycogen synthase (481 aa).

Lys16 serves as a coordination point for ADP-alpha-D-glucose.

It belongs to the glycosyltransferase 1 family. Bacterial/plant glycogen synthase subfamily.

The catalysed reaction is [(1-&gt;4)-alpha-D-glucosyl](n) + ADP-alpha-D-glucose = [(1-&gt;4)-alpha-D-glucosyl](n+1) + ADP + H(+). Its pathway is glycan biosynthesis; glycogen biosynthesis. Functionally, synthesizes alpha-1,4-glucan chains using ADP-glucose. This Lacticaseibacillus casei (strain BL23) (Lactobacillus casei) protein is Glycogen synthase.